Here is a 411-residue protein sequence, read N- to C-terminus: Tyrosine--tRNA ligase (411 aa).

Positions 50 to 59 (PTRPDLHLGH) match the 'HIGH' region motif. Positions 236–240 (KMSKS) match the 'KMSKS' region motif. Lys239 provides a ligand contact to ATP. One can recognise an S4 RNA-binding domain in the interval 345–409 (VSMAKLVVLA…GKDKFARLVL (65 aa)).

The protein belongs to the class-I aminoacyl-tRNA synthetase family. TyrS type 2 subfamily. Homodimer.

The protein resides in the cytoplasm. The catalysed reaction is tRNA(Tyr) + L-tyrosine + ATP = L-tyrosyl-tRNA(Tyr) + AMP + diphosphate + H(+). Functionally, catalyzes the attachment of tyrosine to tRNA(Tyr) in a two-step reaction: tyrosine is first activated by ATP to form Tyr-AMP and then transferred to the acceptor end of tRNA(Tyr). This is Tyrosine--tRNA ligase from Deinococcus radiodurans (strain ATCC 13939 / DSM 20539 / JCM 16871 / CCUG 27074 / LMG 4051 / NBRC 15346 / NCIMB 9279 / VKM B-1422 / R1).